A 118-amino-acid polypeptide reads, in one-letter code: Small ribosomal subunit protein uS10 (118 aa).

S37 bears the Phosphoserine mark.

This sequence belongs to the universal ribosomal protein uS10 family. In terms of assembly, component of the small ribosomal subunit (SSU). Mature yeast ribosomes consist of a small (40S) and a large (60S) subunit. The 40S small subunit contains 1 molecule of ribosomal RNA (18S rRNA) and at least 33 different proteins. The large 60S subunit contains 3 rRNA molecules (25S, 5.8S and 5S rRNA) and at least 46 different proteins.

The protein localises to the cytoplasm. In terms of biological role, component of the ribosome, a large ribonucleoprotein complex responsible for the synthesis of proteins in the cell. The small ribosomal subunit (SSU) binds messenger RNAs (mRNAs) and translates the encoded message by selecting cognate aminoacyl-transfer RNA (tRNA) molecules. The large subunit (LSU) contains the ribosomal catalytic site termed the peptidyl transferase center (PTC), which catalyzes the formation of peptide bonds, thereby polymerizing the amino acids delivered by tRNAs into a polypeptide chain. The nascent polypeptides leave the ribosome through a tunnel in the LSU and interact with protein factors that function in enzymatic processing, targeting, and the membrane insertion of nascent chains at the exit of the ribosomal tunnel. In Schizosaccharomyces pombe (strain 972 / ATCC 24843) (Fission yeast), this protein is Small ribosomal subunit protein uS10 (rps20).